Consider the following 423-residue polypeptide: CinA-like protein (423 aa).

It belongs to the CinA family.

The polypeptide is CinA-like protein (Desulforapulum autotrophicum (strain ATCC 43914 / DSM 3382 / VKM B-1955 / HRM2) (Desulfobacterium autotrophicum)).